A 202-amino-acid polypeptide reads, in one-letter code: Dephospho-CoA kinase (202 aa).

The DPCK domain maps to 6 to 202; the sequence is KISVTGDPSS…QCFKALKGTI (197 aa). 14 to 19 is an ATP binding site; the sequence is SSGKTE.

The protein belongs to the CoaE family.

The protein resides in the cytoplasm. The enzyme catalyses 3'-dephospho-CoA + ATP = ADP + CoA + H(+). It functions in the pathway cofactor biosynthesis; coenzyme A biosynthesis; CoA from (R)-pantothenate: step 5/5. In terms of biological role, catalyzes the phosphorylation of the 3'-hydroxyl group of dephosphocoenzyme A to form coenzyme A. In Chlamydia trachomatis serovar A (strain ATCC VR-571B / DSM 19440 / HAR-13), this protein is Dephospho-CoA kinase.